Consider the following 498-residue polypeptide: ATP synthase subunit beta, chloroplastic (498 aa).

172-179 (GGAGVGKT) provides a ligand contact to ATP.

The protein belongs to the ATPase alpha/beta chains family. As to quaternary structure, F-type ATPases have 2 components, CF(1) - the catalytic core - and CF(0) - the membrane proton channel. CF(1) has five subunits: alpha(3), beta(3), gamma(1), delta(1), epsilon(1). CF(0) has four main subunits: a(1), b(1), b'(1) and c(9-12).

The protein resides in the plastid. The protein localises to the chloroplast thylakoid membrane. It catalyses the reaction ATP + H2O + 4 H(+)(in) = ADP + phosphate + 5 H(+)(out). Produces ATP from ADP in the presence of a proton gradient across the membrane. The catalytic sites are hosted primarily by the beta subunits. This is ATP synthase subunit beta, chloroplastic from Calycanthus floridus (Eastern sweetshrub).